We begin with the raw amino-acid sequence, 75 residues long: Small ribosomal subunit protein bS18 (75 aa).

The protein belongs to the bacterial ribosomal protein bS18 family. As to quaternary structure, part of the 30S ribosomal subunit. Forms a tight heterodimer with protein bS6.

In terms of biological role, binds as a heterodimer with protein bS6 to the central domain of the 16S rRNA, where it helps stabilize the platform of the 30S subunit. This is Small ribosomal subunit protein bS18 from Pseudoalteromonas atlantica (strain T6c / ATCC BAA-1087).